We begin with the raw amino-acid sequence, 246 residues long: MIRFLIPTAKEMKPSKEVPSQKLSEKSEAILTEMAKLSTDDLSIAYKIKPEQAEKEKQRWDAILAGEAKNYPAVELFNGLMYRHIKRKDLSTCEKDFLSHQVFITSSFYGIIPAFYPIQEHRHDFHTKVKVNGQSLKNYWRAEYDQFLEESQVPVVSLLSSEFEDVFSPSLRKQLFTVSFMEDRNGILKTHSTISKKARGAFLTAVMEESCQTIDALRDLSFDDFYYRKDLSSDSELFFVRKVKKV.

Belongs to the UPF0246 family.

In Streptococcus thermophilus (strain CNRZ 1066), this protein is UPF0246 protein str1967.